The chain runs to 85 residues: U4-theraphotoxin-Hhn1a (85 aa).

The first 22 residues, 1–22 (MKVTLIAILTCAAVLVLHTTAA), serve as a signal peptide directing secretion. The propeptide occupies 23–48 (EELEAESQLMEVGMPDTELEAVDEER). 3 cysteine pairs are disulfide-bonded: Cys52–Cys66, Cys56–Cys77, and Cys71–Cys82.

Belongs to the neurotoxin 12 (Hwtx-2) family. 02 (Hwtx-2) subfamily. Monomer. As to expression, expressed by the venom gland.

The protein resides in the secreted. Its function is as follows. Neurotoxin active on both insects and mammals. The polypeptide is U4-theraphotoxin-Hhn1a (Cyriopagopus hainanus (Chinese bird spider)).